Reading from the N-terminus, the 213-residue chain is MSNIAAPRLPVPGPDLRAPGQGGPAFDDQVFNRLLANRIVFLGSVVEDSIANAICAQLLLLNAEDPTRDIFLYINSPGGSVSAGMAIYDTMQFVENDVATVSLGLAASMGQFLLCAGASGKRYSLPHARIMMHQPSGGIGGTASDIAIQAEQMLYTKRMMQERIAFHTGQPIEQIERDSDRDRWFTAEEAKDYGFVDHVVQQARQVPSEGPVS.

Serine 108 functions as the Nucleophile in the catalytic mechanism. Residue histidine 133 is part of the active site.

It belongs to the peptidase S14 family. In terms of assembly, fourteen ClpP subunits assemble into 2 heptameric rings which stack back to back to give a disk-like structure with a central cavity, resembling the structure of eukaryotic proteasomes.

The protein localises to the cytoplasm. It carries out the reaction Hydrolysis of proteins to small peptides in the presence of ATP and magnesium. alpha-casein is the usual test substrate. In the absence of ATP, only oligopeptides shorter than five residues are hydrolyzed (such as succinyl-Leu-Tyr-|-NHMec, and Leu-Tyr-Leu-|-Tyr-Trp, in which cleavage of the -Tyr-|-Leu- and -Tyr-|-Trp bonds also occurs).. Its function is as follows. Cleaves peptides in various proteins in a process that requires ATP hydrolysis. Has a chymotrypsin-like activity. Plays a major role in the degradation of misfolded proteins. This Frankia casuarinae (strain DSM 45818 / CECT 9043 / HFP020203 / CcI3) protein is ATP-dependent Clp protease proteolytic subunit 1.